The primary structure comprises 398 residues: Nicotinate phosphoribosyltransferase (398 aa).

His214 is modified (phosphohistidine; by autocatalysis).

This sequence belongs to the NAPRTase family. Post-translationally, transiently phosphorylated on a His residue during the reaction cycle. Phosphorylation strongly increases the affinity for substrates and increases the rate of nicotinate D-ribonucleotide production. Dephosphorylation regenerates the low-affinity form of the enzyme, leading to product release.

The enzyme catalyses nicotinate + 5-phospho-alpha-D-ribose 1-diphosphate + ATP + H2O = nicotinate beta-D-ribonucleotide + ADP + phosphate + diphosphate. It participates in cofactor biosynthesis; NAD(+) biosynthesis; nicotinate D-ribonucleotide from nicotinate: step 1/1. Catalyzes the synthesis of beta-nicotinate D-ribonucleotide from nicotinate and 5-phospho-D-ribose 1-phosphate at the expense of ATP. The chain is Nicotinate phosphoribosyltransferase from Xanthomonas campestris pv. campestris (strain 8004).